The chain runs to 226 residues: Phosphoenolpyruvate guanylyltransferase (226 aa).

Phosphoenolpyruvate-binding residues include T145, G161, and S164.

Belongs to the CofC family.

It catalyses the reaction phosphoenolpyruvate + GTP + H(+) = enolpyruvoyl-2-diphospho-5'-guanosine + diphosphate. Its pathway is cofactor biosynthesis; coenzyme F420 biosynthesis. In terms of biological role, guanylyltransferase that catalyzes the activation of phosphoenolpyruvate (PEP) as enolpyruvoyl-2-diphospho-5'-guanosine, via the condensation of PEP with GTP. It is involved in the biosynthesis of coenzyme F420, a hydride carrier cofactor. This chain is Phosphoenolpyruvate guanylyltransferase, found in Nocardia farcinica (strain IFM 10152).